An 849-amino-acid chain; its full sequence is Villin-1 (849 aa).

Gelsolin-like repeat units follow at residues 30-107 (IEKS…DKFL), 147-213 (RVTE…EDGK), 262-335 (VPVE…TVEF), 405-475 (QEQL…PEMF), and 527-566 (AIQV…DHNL). A disordered region spans residues 739–849 (ETPERSLRKS…AVATGTPRRR (111 aa)). Low complexity-rich tracts occupy residues 747 to 782 (KSSS…SAST) and 791 to 823 (PAAL…STPS).

The protein belongs to the villin/gelsolin family. In terms of tissue distribution, expressed in roots, young leaves, and inflorescences, mostly in the vasculature of roots, leaves, and filaments of the anthers. Also detected in guard cells.

Its subcellular location is the cytoplasm. The protein localises to the cytoskeleton. Ca(2+)-independent actin-binding protein. Binds actin microfilaments (MFs). Involved in actin filament bundling, severing and capping. Caps the barbed end of actin filaments and protects them from disassembly. Promotes VLN3-mediated MF severing. The chain is Villin-1 from Oryza sativa subsp. japonica (Rice).